Consider the following 319-residue polypeptide: F-box only protein 8 (319 aa).

One can recognise an F-box domain in the interval 68 to 111; sequence FINLEMLPPELSFTILSYLNATDLCLASCVWQDLANDELLWQGL. The 131-residue stretch at 146–276 folds into the SEC7 domain; it reads FNANPDEGVN…LILLSIDLTS (131 aa).

Functionally, may promote guanine-nucleotide exchange on an ARF. Promotes the activation of ARF through replacement of GDP with GTP (Potential). The polypeptide is F-box only protein 8 (FBXO8) (Homo sapiens (Human)).